The chain runs to 459 residues: MFMFNFDNGHDPNRPSFFEMLNQHQMMPSFKPALKYIFTVLSQRNPKFRYIVNYYDECFYSLLLLLEYHYLKYYEGSFSENFYNLKRIKPRNNNANGDGDTLFSLLKRLVVTPSNAGQGPETYTKSQILKKSFAMIRRNRAAASSSQQAKDDLNTMIQDSDRKESLIYLVLIPYFKGKLDEYYKKESDPLAELGLVSSDNNNNNNDNINDQIQQLEEQIQQQQTIVNGNNNSNNNNKKLKIKFLILIRFLKGSKTLKKLKTIFLKVYPFISAIYEALFFIYQLLYLYEYTNYYTPFFHFQNIQLKRLNHKDIESHRVVISNRRRDRINFVRDWPGSSFFVRLVSILDSILDYSKYILPLSVFIFKSLEWWYSENRISAPTLPIPTPPTPSKRAPGGLEIPRDKRLCPLCLKERTNPTICGSGFVFCYPCIFGYVNEHSKCPITFLPTNTEQLRKIYETV.

Residues 1-16 (MFMFNFDNGHDPNRPS) lie on the Peroxisomal matrix side of the membrane. The helical transmembrane segment at 17-44 (FFEMLNQHQMMPSFKPALKYIFTVLSQR) threads the bilayer. The Cytoplasmic segment spans residues 45–47 (NPK). A helical membrane pass occupies residues 48–72 (FRYIVNYYDECFYSLLLLLEYHYLK). Residues 73 to 158 (YYEGSFSENF…AKDDLNTMIQ (86 aa)) lie on the Peroxisomal matrix side of the membrane. A helical transmembrane segment spans residues 159-196 (DSDRKESLIYLVLIPYFKGKLDEYYKKESDPLAELGLV). Topologically, residues 197–248 (SSDNNNNNNDNINDQIQQLEEQIQQQQTIVNGNNNSNNNNKKLKIKFLILIR) are cytoplasmic. The helical transmembrane segment at 249-287 (FLKGSKTLKKLKTIFLKVYPFISAIYEALFFIYQLLYLY) threads the bilayer. Residues 288 to 355 (EYTNYYTPFF…LDSILDYSKY (68 aa)) lie on the Peroxisomal matrix side of the membrane. A helical membrane pass occupies residues 356–380 (ILPLSVFIFKSLEWWYSENRISAPT). Topologically, residues 381-459 (LPIPTPPTPS…EQLRKIYETV (79 aa)) are cytoplasmic. Zn(2+) is bound by residues Cys-406, Cys-409, Cys-426, and Cys-429. The RING-type; degenerate zinc-finger motif lies at 406 to 444 (CPLCLKERTNPTICGSGFVFCYPCIFGYVNEHSKCPITF).

It belongs to the pex2/pex10/pex12 family. Component of the PEX2-PEX10-PEX12 retrotranslocation channel.

The protein localises to the peroxisome membrane. It functions in the pathway protein modification; protein ubiquitination. In terms of biological role, component of a retrotranslocation channel required for peroxisome organization by mediating export of the PEX5 receptor from peroxisomes to the cytosol, thereby promoting PEX5 recycling. The retrotranslocation channel is composed of PEX2, PEX10 and PEX12; each subunit contributing transmembrane segments that coassemble into an open channel that specifically allows the passage of PEX5 through the peroxisomal membrane. PEX12 also regulates PEX5 recycling by activating the E3 ubiquitin-protein ligase activity of PEX10. When PEX5 recycling is compromised, PEX12 stimulates PEX10-mediated polyubiquitination of PEX5, leading to its subsequent degradation. This Dictyostelium discoideum (Social amoeba) protein is Putative peroxisome assembly protein 12 (pex12).